The following is a 160-amino-acid chain: uncharacterized protein (160 aa).

This is an uncharacterized protein from Gracula (BFDV).